A 496-amino-acid polypeptide reads, in one-letter code: Inosine-5'-monophosphate dehydrogenase (496 aa).

CBS domains are found at residues 96–152 (VIKD…TKKV) and 156–212 (MTKD…PQAA). NAD(+)-binding positions include Asp247 and 299-301 (GIG). Gly301 and Gly303 together coordinate K(+). IMP is bound at residue Ser304. Position 306 (Cys306) interacts with K(+). Cys306 (thioimidate intermediate) is an active-site residue. IMP-binding positions include 339 to 341 (DGG), 362 to 363 (GS), and 386 to 390 (YRGMG). Arg405 functions as the Proton acceptor in the catalytic mechanism. Residue Glu423 coordinates IMP. K(+) contacts are provided by Glu477, Ser478, and His479.

Belongs to the IMPDH/GMPR family. In terms of assembly, homotetramer. K(+) serves as cofactor.

It carries out the reaction IMP + NAD(+) + H2O = XMP + NADH + H(+). It functions in the pathway purine metabolism; XMP biosynthesis via de novo pathway; XMP from IMP: step 1/1. With respect to regulation, mycophenolic acid (MPA) is a non-competitive inhibitor that prevents formation of the closed enzyme conformation by binding to the same site as the amobile flap. In contrast, mizoribine monophosphate (MZP) is a competitive inhibitor that induces the closed conformation. MPA is a potent inhibitor of mammalian IMPDHs but a poor inhibitor of the bacterial enzymes. MZP is a more potent inhibitor of bacterial IMPDH. Functionally, catalyzes the conversion of inosine 5'-phosphate (IMP) to xanthosine 5'-phosphate (XMP), the first committed and rate-limiting step in the de novo synthesis of guanine nucleotides, and therefore plays an important role in the regulation of cell growth. The sequence is that of Inosine-5'-monophosphate dehydrogenase from Methanocaldococcus jannaschii (strain ATCC 43067 / DSM 2661 / JAL-1 / JCM 10045 / NBRC 100440) (Methanococcus jannaschii).